Here is a 320-residue protein sequence, read N- to C-terminus: Acyl-coenzyme A thioesterase 8 (320 aa).

Catalysis depends on charge relay system residues aspartate 233, serine 255, and glutamine 305. The short motif at 318-320 (SKL) is the Microbody targeting signal element.

The protein belongs to the C/M/P thioester hydrolase family. In terms of assembly, homodimer. In terms of tissue distribution, ubiquitous.

The protein localises to the peroxisome matrix. The enzyme catalyses choloyl-CoA + H2O = cholate + CoA + H(+). The catalysed reaction is chenodeoxycholoyl-CoA + H2O = chenodeoxycholate + CoA + H(+). It carries out the reaction acetyl-CoA + H2O = acetate + CoA + H(+). It catalyses the reaction malonyl-CoA + H2O = malonate + CoA + H(+). The enzyme catalyses acetoacetyl-CoA + H2O = acetoacetate + CoA + H(+). The catalysed reaction is propanoyl-CoA + H2O = propanoate + CoA + H(+). It carries out the reaction butanoyl-CoA + H2O = butanoate + CoA + H(+). It catalyses the reaction succinyl-CoA + H2O = succinate + CoA + H(+). The enzyme catalyses glutaryl-CoA + H2O = glutarate + CoA + H(+). The catalysed reaction is hexanoyl-CoA + H2O = hexanoate + CoA + H(+). It carries out the reaction hexanedioyl-CoA + H2O = hexanedioate + CoA + H(+). It catalyses the reaction octanoyl-CoA + H2O = octanoate + CoA + H(+). The enzyme catalyses octanedioyl-CoA + H2O = octanedioate + CoA + H(+). The catalysed reaction is decanoyl-CoA + H2O = decanoate + CoA + H(+). It carries out the reaction decanedioyl-CoA + H2O = decanedioate + CoA + H(+). It catalyses the reaction dodecanoyl-CoA + H2O = dodecanoate + CoA + H(+). The enzyme catalyses dodecanedioyl-CoA + H2O = dodecanedioate + CoA + H(+). The catalysed reaction is tetradecanoyl-CoA + H2O = tetradecanoate + CoA + H(+). It carries out the reaction (9Z)-tetradecenoyl-CoA + H2O = (9Z)-tetradecenoate + CoA + H(+). It catalyses the reaction hexadecanoyl-CoA + H2O = hexadecanoate + CoA + H(+). The enzyme catalyses (9Z)-hexadecenoyl-CoA + H2O = (9Z)-hexadecenoate + CoA + H(+). The catalysed reaction is octadecanoyl-CoA + H2O = octadecanoate + CoA + H(+). It carries out the reaction (9Z)-octadecenoyl-CoA + H2O = (9Z)-octadecenoate + CoA + H(+). It catalyses the reaction (9Z,12Z)-octadecadienoyl-CoA + H2O = (9Z,12Z)-octadecadienoate + CoA + H(+). The enzyme catalyses eicosanoyl-CoA + H2O = eicosanoate + CoA + H(+). The catalysed reaction is (5Z,8Z,11Z,14Z)-eicosatetraenoyl-CoA + H2O = (5Z,8Z,11Z,14Z)-eicosatetraenoate + CoA + H(+). It carries out the reaction 4,8-dimethylnonanoyl-CoA + H2O = 4,8-dimethylnonanoate + CoA + H(+). It catalyses the reaction 2,6-dimethylheptanoyl-CoA + H2O = 2,6-dimethylheptanoate + CoA + H(+). The enzyme catalyses (3S)-3-hydroxy-3-methylglutaryl-CoA + H2O = 3-hydroxy-3-methylglutarate + CoA + H(+). The catalysed reaction is 3alpha,7alpha,12alpha-trihydroxy-5beta-cholestan-26-oyl-CoA + H2O = 3alpha,7alpha,12alpha-trihydroxy-5beta-cholestan-26-oate + CoA + H(+). It carries out the reaction 2-methyloctadecanoyl-CoA + H2O = 2-methyloctadecanoate + CoA + H(+). It catalyses the reaction prostaglandin F2alpha-CoA + H2O = prostaglandin F2alpha + CoA + H(+). It participates in lipid metabolism; fatty acid metabolism. Inhibited by CoASH (IC(50)=10-15 uM). Also inhibited by cysteine-reactive agents. Catalyzes the hydrolysis of acyl-CoAs into free fatty acids and coenzyme A (CoASH), regulating their respective intracellular levels. Displays no strong substrate specificity with respect to the carboxylic acid moiety of Acyl-CoAs. Hydrolyzes medium length (C2 to C20) straight-chain, saturated and unsaturated acyl-CoAS but is inactive towards substrates with longer aliphatic chains. Moreover, it catalyzes the hydrolysis of CoA esters of bile acids, such as choloyl-CoA and chenodeoxycholoyl-CoA and competes with bile acid CoA:amino acid N-acyltransferase (BAAT). Is also able to hydrolyze CoA esters of dicarboxylic acids. It is involved in the metabolic regulation of peroxisome proliferation. The sequence is that of Acyl-coenzyme A thioesterase 8 (Acot8) from Mus musculus (Mouse).